A 1862-amino-acid polypeptide reads, in one-letter code: Chitin synthase V (1862 aa).

The disordered stretch occupies residues Met1–His26. In terms of domain architecture, Myosin motor spans Met1–Glu778. Asn63 carries an N-linked (GlcNAc...) asparagine glycan. Gly104–Ser111 provides a ligand contact to ATP. 5 N-linked (GlcNAc...) asparagine glycosylation sites follow: Asn123, Asn429, Asn483, Asn522, and Asn560. Residues Thr592–Lys643 are disordered. Residues Leu658–Asp682 form an actin-binding region. Helical transmembrane passes span Trp884–Gly904 and Met923–Ile943. The 63-residue stretch at Gln947–Phe1009 folds into the Cytochrome b5 heme-binding domain. N-linked (GlcNAc...) asparagine glycosylation is found at Asn1036, Asn1063, and Asn1192. Residues Phe1202–Leu1222 traverse the membrane as a helical segment. N-linked (GlcNAc...) asparagine glycosylation is found at Asn1459 and Asn1565. 3 helical membrane-spanning segments follow: residues Phe1590–Val1610, Val1623–Ile1643, and Met1650–Leu1670. An N-linked (GlcNAc...) asparagine glycan is attached at Asn1771. The DEK-C domain occupies Met1804–Ser1859.

The protein in the N-terminal section; belongs to the TRAFAC class myosin-kinesin ATPase superfamily. Myosin family. It in the C-terminal section; belongs to the chitin synthase family. Class V subfamily.

It localises to the cell membrane. It carries out the reaction [(1-&gt;4)-N-acetyl-beta-D-glucosaminyl](n) + UDP-N-acetyl-alpha-D-glucosamine = [(1-&gt;4)-N-acetyl-beta-D-glucosaminyl](n+1) + UDP + H(+). Its function is as follows. Polymerizes chitin, a structural polymer of the cell wall and septum, by transferring the sugar moiety of UDP-GlcNAc to the non-reducing end of the growing chitin polymer. ChsV and chsVb do perform additive, but not redundant, functions in septum formation. Involved in cell wall integrity and resistance to antimicrobial plant defense compounds such as the tomato phytoanticipin alpha-tomatine or H(2)O(2), and plays a crucial role in vascular colonization and pathogenicity. Also plays an important role in nuclear sorting or distribution. The chain is Chitin synthase V from Fusarium oxysporum f. sp. lycopersici (strain 4287 / CBS 123668 / FGSC 9935 / NRRL 34936) (Fusarium vascular wilt of tomato).